The chain runs to 415 residues: DNA polymerase IV 2 (415 aa).

Residues 7-183 form the UmuC domain; sequence ILHADLDAFY…LPVSLMWGVG (177 aa). Residues aspartate 11 and aspartate 101 each coordinate Mg(2+). The active site involves glutamate 102.

It belongs to the DNA polymerase type-Y family. As to quaternary structure, monomer. Mg(2+) is required as a cofactor.

It is found in the cytoplasm. It carries out the reaction DNA(n) + a 2'-deoxyribonucleoside 5'-triphosphate = DNA(n+1) + diphosphate. In terms of biological role, poorly processive, error-prone DNA polymerase involved in untargeted mutagenesis. Copies undamaged DNA at stalled replication forks, which arise in vivo from mismatched or misaligned primer ends. These misaligned primers can be extended by PolIV. Exhibits no 3'-5' exonuclease (proofreading) activity. May be involved in translesional synthesis, in conjunction with the beta clamp from PolIII. The protein is DNA polymerase IV 2 (dinB2) of Mesorhizobium japonicum (strain LMG 29417 / CECT 9101 / MAFF 303099) (Mesorhizobium loti (strain MAFF 303099)).